The sequence spans 249 residues: Coproheme decarboxylase (249 aa).

Residues arginine 131, 145 to 149, histidine 172, and glutamine 185 contribute to the Fe-coproporphyrin III site; that span reads YPMNK. Tyrosine 145 is a catalytic residue.

This sequence belongs to the ChdC family. Type 1 subfamily. It depends on Fe-coproporphyrin III as a cofactor.

It catalyses the reaction Fe-coproporphyrin III + 2 H2O2 + 2 H(+) = heme b + 2 CO2 + 4 H2O. The catalysed reaction is Fe-coproporphyrin III + H2O2 + H(+) = harderoheme III + CO2 + 2 H2O. The enzyme catalyses harderoheme III + H2O2 + H(+) = heme b + CO2 + 2 H2O. It participates in porphyrin-containing compound metabolism; protoheme biosynthesis. Its function is as follows. Involved in coproporphyrin-dependent heme b biosynthesis. Catalyzes the decarboxylation of Fe-coproporphyrin III (coproheme) to heme b (protoheme IX), the last step of the pathway. The reaction occurs in a stepwise manner with a three-propionate intermediate. The chain is Coproheme decarboxylase from Staphylococcus carnosus (strain TM300).